The primary structure comprises 32 residues: Cytochrome b6-f complex subunit 8 (32 aa).

The helical transmembrane segment at 6-26 (IVSLAWAALMVVFTFSLSLVV) threads the bilayer.

Belongs to the PetN family. The 4 large subunits of the cytochrome b6-f complex are cytochrome b6, subunit IV (17 kDa polypeptide, PetD), cytochrome f and the Rieske protein, while the 4 small subunits are PetG, PetL, PetM and PetN. The complex functions as a dimer.

Its subcellular location is the plastid. The protein resides in the chloroplast thylakoid membrane. Functionally, component of the cytochrome b6-f complex, which mediates electron transfer between photosystem II (PSII) and photosystem I (PSI), cyclic electron flow around PSI, and state transitions. The polypeptide is Cytochrome b6-f complex subunit 8 (Illicium oligandrum (Star anise)).